The chain runs to 278 residues: Large ribosomal subunit protein uL2c (278 aa).

Disordered stretches follow at residues 32 to 56 and 203 to 256; these read SLTS…HRGG and QSIG…PTIG. A compositionally biased stretch (basic residues) spans 209–220; sequence GSKRWQGKRPKV.

It belongs to the universal ribosomal protein uL2 family. In terms of assembly, part of the 50S ribosomal subunit.

Its subcellular location is the plastid. The protein resides in the chloroplast. In Chara vulgaris (Common stonewort), this protein is Large ribosomal subunit protein uL2c (rpl2).